A 139-amino-acid polypeptide reads, in one-letter code: Actin-depolymerizing factor 6 (139 aa).

The 135-residue stretch at 5–139 (ASGMAVGDEC…SMDIVKARAL (135 aa)) folds into the ADF-H domain.

This sequence belongs to the actin-binding proteins ADF family.

Actin-depolymerizing protein. Severs actin filaments (F-actin) and binds to actin monomers. The protein is Actin-depolymerizing factor 6 (ADF6) of Oryza sativa subsp. japonica (Rice).